Here is a 596-residue protein sequence, read N- to C-terminus: Trehalase (596 aa).

An N-terminal signal peptide occupies residues 1-23 (MFKLPTISLLLVSWSCLVALSQA). Residues Arg193, 200–201 (WD), Asn237, and 246–248 (RSQ) contribute to the substrate site. Residues Asn288 and Asn293 are each glycosylated (N-linked (GlcNAc...) asparagine). The interval 303–323 (SSGPRPESYREDVETGEEFPT) is disordered. Substrate-binding positions include 307–309 (RPE) and Gly341. Asp343 serves as the catalytic Proton donor/acceptor. N-linked (GlcNAc...) asparagine glycosylation is found at Asn359, Asn451, and Asn516. Glu541 functions as the Proton donor/acceptor in the catalytic mechanism. A substrate-binding site is contributed by Glu556.

It belongs to the glycosyl hydrolase 37 family. In the adult brain predominantly expressed in glial cells (at protein level).

It catalyses the reaction alpha,alpha-trehalose + H2O = alpha-D-glucose + beta-D-glucose. In terms of biological role, enzyme that cleaves trehalose to produce 2 glucose molecules that can be used by the glycolytic pathway. Glycolysis is essential in glial cells but not in neurons; neurons rely on the citric acid cycle for their energy needs, and on lactate and alanine secreted into the hemolymph by glial cells to fuel it. The polypeptide is Trehalase (Drosophila melanogaster (Fruit fly)).